The sequence spans 295 residues: UDP-N-acetylenolpyruvoylglucosamine reductase (295 aa).

The FAD-binding PCMH-type domain maps to 26-189 (VGGRADVLFK…VEAEFKGVNS (164 aa)). Residue Arg169 is part of the active site. The Proton donor role is filled by Cys218. Residue Glu288 is part of the active site.

This sequence belongs to the MurB family. The cofactor is FAD.

The protein localises to the cytoplasm. The catalysed reaction is UDP-N-acetyl-alpha-D-muramate + NADP(+) = UDP-N-acetyl-3-O-(1-carboxyvinyl)-alpha-D-glucosamine + NADPH + H(+). Its pathway is cell wall biogenesis; peptidoglycan biosynthesis. In terms of biological role, cell wall formation. This is UDP-N-acetylenolpyruvoylglucosamine reductase from Wolbachia pipientis wMel.